The sequence spans 175 residues: NADH-quinone oxidoreductase subunit I (175 aa).

2 consecutive 4Fe-4S ferredoxin-type domains span residues 69–98 (KRDE…IEAA) and 115–144 (KKFE…LDGT). [4Fe-4S] cluster-binding residues include cysteine 78, cysteine 81, cysteine 84, cysteine 88, cysteine 124, cysteine 127, cysteine 130, and cysteine 134.

It belongs to the complex I 23 kDa subunit family. In terms of assembly, NDH-1 is composed of 14 different subunits. Subunits NuoA, H, J, K, L, M, N constitute the membrane sector of the complex. [4Fe-4S] cluster serves as cofactor.

Its subcellular location is the cell inner membrane. It carries out the reaction a quinone + NADH + 5 H(+)(in) = a quinol + NAD(+) + 4 H(+)(out). NDH-1 shuttles electrons from NADH, via FMN and iron-sulfur (Fe-S) centers, to quinones in the respiratory chain. The immediate electron acceptor for the enzyme in this species is believed to be ubiquinone. Couples the redox reaction to proton translocation (for every two electrons transferred, four hydrogen ions are translocated across the cytoplasmic membrane), and thus conserves the redox energy in a proton gradient. This chain is NADH-quinone oxidoreductase subunit I, found in Leptospira biflexa serovar Patoc (strain Patoc 1 / Ames).